The following is a 145-amino-acid chain: Peptide methionine sulfoxide reductase MsrB (145 aa).

The 124-residue stretch at 6–129 (KNERLKQLTD…NSAALRFIPV (124 aa)) folds into the MsrB domain. Cys118 (nucleophile) is an active-site residue.

It belongs to the MsrB Met sulfoxide reductase family.

It carries out the reaction L-methionyl-[protein] + [thioredoxin]-disulfide + H2O = L-methionyl-(R)-S-oxide-[protein] + [thioredoxin]-dithiol. The polypeptide is Peptide methionine sulfoxide reductase MsrB (Listeria welshimeri serovar 6b (strain ATCC 35897 / DSM 20650 / CCUG 15529 / CIP 8149 / NCTC 11857 / SLCC 5334 / V8)).